The sequence spans 281 residues: BEN domain-containing protein 6 (281 aa).

2 disordered regions span residues 15-62 (VLRK…ETPL) and 143-172 (SFAS…PGEK). A coiled-coil region spans residues 19-99 (RKRKRTETAN…RLRQSLVMLQ (81 aa)). A compositionally biased stretch (low complexity) spans 143–160 (SFASLCSNSNSTSSSPSS). A compositionally biased stretch (basic and acidic residues) spans 162–172 (KAEEEQHPGEK). Positions 171-271 (EKQFTIERWQ…NCTKKPNASK (101 aa)) constitute a BEN domain.

As to quaternary structure, interacts (via BEN domain) with RBPJ.

Its subcellular location is the nucleus. Functionally, acts as a corepressor of recombining binding protein suppressor hairless (RBPJ) and inhibits Notch signaling in neural stem cells, thereby opposing their self-renewal and promoting neurogenesis. The polypeptide is BEN domain-containing protein 6 (Bend6) (Mus musculus (Mouse)).